The chain runs to 95 residues: Costars family protein WS02710_H03 (95 aa).

Belongs to the costars family.

The sequence is that of Costars family protein WS02710_H03 from Picea sitchensis (Sitka spruce).